Reading from the N-terminus, the 79-residue chain is D-alanyl carrier protein (79 aa).

Residues 1–77 (MDIKSEVIEI…KIIAGIVELQ (77 aa)) enclose the Carrier domain. An O-(pantetheine 4'-phosphoryl)serine modification is found at S35.

The protein belongs to the DltC family. Post-translationally, 4'-phosphopantetheine is transferred from CoA to a specific serine of apo-DCP.

Its subcellular location is the cytoplasm. It participates in cell wall biogenesis; lipoteichoic acid biosynthesis. Carrier protein involved in the D-alanylation of lipoteichoic acid (LTA). The loading of thioester-linked D-alanine onto DltC is catalyzed by D-alanine--D-alanyl carrier protein ligase DltA. The DltC-carried D-alanyl group is further transferred to cell membrane phosphatidylglycerol (PG) by forming an ester bond, probably catalyzed by DltD. D-alanylation of LTA plays an important role in modulating the properties of the cell wall in Gram-positive bacteria, influencing the net charge of the cell wall. The sequence is that of D-alanyl carrier protein from Streptococcus pneumoniae serotype 2 (strain D39 / NCTC 7466).